A 1363-amino-acid chain; its full sequence is Spike glycoprotein (1363 aa).

A signal peptide spans 1 to 13 (MFLILLISLPTAF). Residues 14-1307 (AVIGDLKCTT…GTYEYYVKWP (1294 aa)) lie on the Extracellular side of the membrane. Residues 15 to 298 (VIGDLKCTTV…DFMSEIKCKT (284 aa)) form the BetaCoV S1-NTD domain. Disulfide bonds link Cys21–Cys165, Cys160–Cys193, Cys172–Cys252, Cys286–Cys296, and Cys331–Cys356. 2 N-linked (GlcNAc...) asparagine; by host glycosylation sites follow: Asn59 and Asn133. N-linked (GlcNAc...) asparagine; by host glycosylation is present at Asn198. Residues 329 to 617 (PDCNIEAWLN…DVNSGTTCST (289 aa)) enclose the BetaCoV S1-CTD domain. The N-linked (GlcNAc...) asparagine; by host glycan is linked to Asn359. 2 disulfide bridges follow: Cys374-Cys427 and Cys386-Cys615. N-linked (GlcNAc...) asparagine; by host glycosylation is found at Asn437, Asn649, Asn676, Asn696, Asn714, Asn739, and Asn788. Fusion peptide regions lie at residues 914–935 (SAIE…VEAY) and 933–953 (EAYN…VQSY). A glycan (N-linked (GlcNAc...) asparagine; by host) is linked at Asn937. An intrachain disulfide couples Cys938 to Cys949. A heptad repeat 1 region spans residues 1014 to 1064 (QKLIANAFNNALGAIQEGFDATNSALVKIQAVVNANAETLNNLLQQLSNRF). A coiled-coil region spans residues 1043-1087 (QAVVNANAETLNNLLQQLSNRFGAISSSLQEILSRLDALEAQAQI). N-linked (GlcNAc...) asparagine; by host glycosylation is found at Asn1194, Asn1224, Asn1234, Asn1253, Asn1267, and Asn1288. A heptad repeat 2 region spans residues 1258-1296 (APDLSLDYINVTFLDLQDEMNRLQEAIKVLNQSYINLKD). Residues 1269–1297 (TFLDLQDEMNRLQEAIKVLNQSYINLKDI) adopt a coiled-coil conformation. The chain crosses the membrane as a helical span at residues 1308-1328 (WYVWLLIGFAGVAMLVLLFFI). Topologically, residues 1329–1363 (CCCTGCGTSCFKKCGGCCDDYTGHQELVIKTSHED) are cytoplasmic. Positions 1359-1363 (TSHED) match the KxHxx motif.

The protein belongs to the betacoronaviruses spike protein family. As to quaternary structure, homotrimer; each monomer consists of a S1 and a S2 subunit. The resulting peplomers protrude from the virus surface as spikes. In terms of processing, specific enzymatic cleavages in vivo yield mature proteins. The precursor is processed into S1 and S2 by host cell furin or another cellular protease to yield the mature S1 and S2 proteins. Additionally, a second cleavage leads to the release of a fusion peptide after viral attachment to host cell receptor. Post-translationally, the cytoplasmic Cys-rich domain is palmitoylated. Spike glycoprotein is digested within host endosomes.

It localises to the virion membrane. The protein localises to the host endoplasmic reticulum-Golgi intermediate compartment membrane. Its subcellular location is the host cell membrane. Attaches the virion to the cell membrane by interacting with host receptor, initiating the infection. In terms of biological role, mediates fusion of the virion and cellular membranes by acting as a class I viral fusion protein. Under the current model, the protein has at least three conformational states: pre-fusion native state, pre-hairpin intermediate state, and post-fusion hairpin state. During viral and target cell membrane fusion, the coiled coil regions (heptad repeats) assume a trimer-of-hairpins structure, positioning the fusion peptide in close proximity to the C-terminal region of the ectodomain. The formation of this structure appears to drive apposition and subsequent fusion of viral and target cell membranes. Functionally, acts as a viral fusion peptide which is unmasked following S2 cleavage occurring upon virus endocytosis. This chain is Spike glycoprotein, found in Bovine coronavirus (strain 98TXSF-110-LUN) (BCoV-LUN).